We begin with the raw amino-acid sequence, 561 residues long: Glutamate--tRNA ligase (561 aa).

The 'HIGH' region signature appears at P107–H117.

This sequence belongs to the class-I aminoacyl-tRNA synthetase family. Glutamate--tRNA ligase type 2 subfamily.

The protein resides in the cytoplasm. The enzyme catalyses tRNA(Glu) + L-glutamate + ATP = L-glutamyl-tRNA(Glu) + AMP + diphosphate. Catalyzes the attachment of glutamate to tRNA(Glu) in a two-step reaction: glutamate is first activated by ATP to form Glu-AMP and then transferred to the acceptor end of tRNA(Glu). The polypeptide is Glutamate--tRNA ligase (Methanoculleus marisnigri (strain ATCC 35101 / DSM 1498 / JR1)).